The following is a 156-amino-acid chain: Ribosomal RNA large subunit methyltransferase H (156 aa).

S-adenosyl-L-methionine is bound by residues Leu72, Gly104, and 123-128 (FGAMVW).

This sequence belongs to the RNA methyltransferase RlmH family. In terms of assembly, homodimer.

The protein localises to the cytoplasm. The catalysed reaction is pseudouridine(1915) in 23S rRNA + S-adenosyl-L-methionine = N(3)-methylpseudouridine(1915) in 23S rRNA + S-adenosyl-L-homocysteine + H(+). Functionally, specifically methylates the pseudouridine at position 1915 (m3Psi1915) in 23S rRNA. The protein is Ribosomal RNA large subunit methyltransferase H of Ruegeria pomeroyi (strain ATCC 700808 / DSM 15171 / DSS-3) (Silicibacter pomeroyi).